The chain runs to 248 residues: Phosphoadenosine 5'-phosphosulfate reductase (248 aa).

Cysteine 239 serves as the catalytic Nucleophile; cysteine thiosulfonate intermediate.

This sequence belongs to the PAPS reductase family. CysH subfamily.

It is found in the cytoplasm. It carries out the reaction [thioredoxin]-disulfide + sulfite + adenosine 3',5'-bisphosphate + 2 H(+) = [thioredoxin]-dithiol + 3'-phosphoadenylyl sulfate. The protein operates within sulfur metabolism; hydrogen sulfide biosynthesis; sulfite from sulfate: step 3/3. Catalyzes the formation of sulfite from phosphoadenosine 5'-phosphosulfate (PAPS) using thioredoxin as an electron donor. In Alteromonas mediterranea (strain DSM 17117 / CIP 110805 / LMG 28347 / Deep ecotype), this protein is Phosphoadenosine 5'-phosphosulfate reductase.